The following is a 1021-amino-acid chain: Putative 115 kDa protein in type-1 retrotransposable element R1DM (1021 aa).

The 263-residue stretch at arginine 479 to valine 741 folds into the Reverse transcriptase domain. Residues cysteine 955–cysteine 971 form a gag-like cysteine motif region.

The protein is Putative 115 kDa protein in type-1 retrotransposable element R1DM (R1A1-element\ORF2) of Drosophila melanogaster (Fruit fly).